A 595-amino-acid chain; its full sequence is Polyadenylate-binding protein-interacting protein 4 (595 aa).

Positions 48–113 constitute a Sm domain; that stretch reads RLVYFTTCKI…SRSEFVRKPP (66 aa). Composition is skewed to polar residues over residues 302–313 and 326–346; these read GGSSTSDGQKPA and GDSQ…TSKQ. Disordered stretches follow at residues 302-505 and 536-595; these read GGSS…FYYP and MYHP…KGRE. Residues 364–382 show a composition bias toward basic and acidic residues; the sequence is DEQRRKNNEEVSHNNRSAE. Over residues 416–465 the composition is skewed to low complexity; that stretch reads SQVSSKTKSESSFGQSASRSSESRPGPSTSSRPGLSPSSSIGSMASSEKS. The PAM2-like 1; degenerate motif lies at 466–474; that stretch reads TLNPNAKEF. The short motif at 475 to 485 is the PAM2-like 2 element; sequence KLNPKAKSFKP. 2 stretches are compositionally biased toward low complexity: residues 488–501 and 548–570; these read SAAA…ADAS and QPQY…PGQQ.

In terms of tissue distribution, expressed in cauline leaves, stems, rosette leaves, immature siliques and primary inflorescences.

The polypeptide is Polyadenylate-binding protein-interacting protein 4 (CID4) (Arabidopsis thaliana (Mouse-ear cress)).